We begin with the raw amino-acid sequence, 100 residues long: NADH-quinone oxidoreductase subunit K (100 aa).

Transmembrane regions (helical) follow at residues 4 to 24, 28 to 48, and 60 to 80; these read LSHG…GMII, LLFM…AFVV, and VMYI…LALL.

Belongs to the complex I subunit 4L family. As to quaternary structure, NDH-1 is composed of 13 different subunits. Subunits NuoA, H, J, K, L, M, N constitute the membrane sector of the complex.

It localises to the cell inner membrane. The enzyme catalyses a quinone + NADH + 5 H(+)(in) = a quinol + NAD(+) + 4 H(+)(out). NDH-1 shuttles electrons from NADH, via FMN and iron-sulfur (Fe-S) centers, to quinones in the respiratory chain. The immediate electron acceptor for the enzyme in this species is believed to be ubiquinone. Couples the redox reaction to proton translocation (for every two electrons transferred, four hydrogen ions are translocated across the cytoplasmic membrane), and thus conserves the redox energy in a proton gradient. The protein is NADH-quinone oxidoreductase subunit K of Sodalis glossinidius (strain morsitans).